Consider the following 415-residue polypeptide: Homoserine O-succinyltransferase (415 aa).

An AB hydrolase-1 domain is found at 69 to 383; sequence NAVLVCHALN…PHGHDAFLLD (315 aa). The active-site Nucleophile is serine 175. Arginine 245 provides a ligand contact to substrate. Active-site residues include aspartate 344 and histidine 377. Aspartate 378 provides a ligand contact to substrate.

This sequence belongs to the AB hydrolase superfamily. MetX family. As to quaternary structure, homodimer.

Its subcellular location is the cytoplasm. The enzyme catalyses L-homoserine + succinyl-CoA = O-succinyl-L-homoserine + CoA. Its pathway is amino-acid biosynthesis; L-methionine biosynthesis via de novo pathway; O-succinyl-L-homoserine from L-homoserine: step 1/1. Transfers a succinyl group from succinyl-CoA to L-homoserine, forming succinyl-L-homoserine. This chain is Homoserine O-succinyltransferase, found in Bordetella pertussis (strain Tohama I / ATCC BAA-589 / NCTC 13251).